The primary structure comprises 404 residues: Ubiquitin-like modifier-activating enzyme 5 (404 aa).

Position 45 is a phosphoserine (serine 45). ATP-binding residues include glycine 83, aspartate 104, lysine 127, asparagine 150, and asparagine 184. 2 residues coordinate Zn(2+): cysteine 226 and cysteine 229. The active-site Glycyl thioester intermediate is cysteine 250. Cysteine 303 and cysteine 308 together coordinate Zn(2+). A UFM1-interacting sequence (UIS) motif is present at residues 334–346 (IIHEDNEWGIELV). The segment at 347–377 (SEISEEELKKSSGPIPDLPEGIIVAYTVPQK) is linker. 2 positions are modified to phosphoserine: serine 358 and serine 393. The UFC1-binding sequence (UFC) motif lies at 389–404 (DSGESLEDLMAKMKNI).

It belongs to the ubiquitin-activating E1 family. UBA5 subfamily. As to quaternary structure, homodimer; homodimerization is required for UFM1 activation. Interacts (via UIS motif) with UFM1; binds UFM1 via a trans-binding mechanism in which UFM1 interacts with distinct sites in both subunits of the UBA5 homodimer. Interacts (via C-terminus) with UFC1. Interacts (via UIS motif) with GABARAPL2 and, with lower affinity, with GABARAP and GABARAPL1.

It localises to the cytoplasm. Its subcellular location is the nucleus. It is found in the endoplasmic reticulum membrane. The protein resides in the golgi apparatus. Functionally, E1-like enzyme which specifically catalyzes the first step in ufmylation. Activates UFM1 by first adenylating its C-terminal glycine residue with ATP, and thereafter linking this residue to the side chain of a cysteine residue in E1, yielding a UFM1-E1 thioester and free AMP. Activates UFM1 via a trans-binding mechanism, in which UFM1 interacts with distinct sites in both subunits of the UBA5 homodimer. Trans-binding also promotes stabilization of the UBA5 homodimer, and enhances ATP-binding. Transfer of UFM1 from UBA5 to the E2-like enzyme UFC1 also takes place using a trans mechanism. Ufmylation plays a key role in various processes, such as ribosome recycling, response to DNA damage, interferon response or reticulophagy (also called ER-phagy). Ufmylation is essential for erythroid differentiation of both megakaryocytes and erythrocytes. The polypeptide is Ubiquitin-like modifier-activating enzyme 5 (Bos taurus (Bovine)).